Reading from the N-terminus, the 1377-residue chain is Zinc finger MYM-type protein 2 (1377 aa).

Residues K48, K88, K98, and K104 each participate in a glycyl lysine isopeptide (Lys-Gly) (interchain with G-Cter in SUMO2) cross-link. 2 stretches are compositionally biased toward polar residues: residues 85 to 115 (TSSK…SVSE) and 127 to 138 (TNQGQEKNSSNF). The tract at residues 85 to 177 (TSSKNEELQG…GMGNSGITTE (93 aa)) is disordered. Over residues 139–152 (IERRPPETKNRTND) the composition is skewed to basic and acidic residues. Residue K147 forms a Glycyl lysine isopeptide (Lys-Gly) (interchain with G-Cter in SUMO2) linkage. Residues 153-164 (VDFSTSSFSRSK) are compositionally biased toward polar residues. Residue S159 is modified to Phosphoserine. Glycyl lysine isopeptide (Lys-Gly) (interchain with G-Cter in SUMO2) cross-links involve residues K253 and K297. The interval 273 to 305 (NGESATHHNPDSWISQSASFPRNQKQPGVDSLS) is disordered. A compositionally biased stretch (polar residues) spans 284–298 (SWISQSASFPRNQKQ). Position 305 is a phosphoserine (S305). Glycyl lysine isopeptide (Lys-Gly) (interchain with G-Cter in SUMO2) cross-links involve residues K312, K325, K348, and K366. The segment at 327-363 (VKVTCANCKKPLQKGQTAYQRKGSAHLFCSTTCLSSF) adopts an MYM-type 1 zinc-finger fold. An MYM-type 2 zinc finger spans residues 369 to 409 (PKKLCVMCKKDITTMKGTIVAQVDSSESFQEFCSTSCLSLY). Glycyl lysine isopeptide (Lys-Gly) (interchain with G-Cter in SUMO2) cross-links involve residues K417, K441, K491, K503, K513, K529, and K532. 2 consecutive MYM-type zinc fingers follow at residues 421-456 (NKSR…FNRY) and 463-502 (IMNC…VSEY). The MYM-type 5 zinc finger occupies 533–570 (LTTCTGCRTQCRFFDMTQCIGPNGYMEPYCSTACMNSH). Residues K576, K603, K649, K658, K688, K700, and K709 each participate in a glycyl lysine isopeptide (Lys-Gly) (interchain with G-Cter in SUMO2) cross-link. The segment at 636–671 (QLKCNYCKNSFCSKPEILEWENKVHQFCSKTCSDDY) adopts an MYM-type 6 zinc-finger fold. MYM-type zinc fingers lie at residues 723-758 (RCVT…CKKF) and 764-799 (KAAR…LLRF). Glycyl lysine isopeptide (Lys-Gly) (interchain with G-Cter in SUMO2) cross-links involve residues K764, K788, K812, and K829. Phosphoserine occurs at positions 838 and 958. Disordered regions lie at residues 983-1002 (LLKN…PYEP) and 1028-1064 (VFGE…SDNS). Positions 1039 to 1050 (PRSKKKGAKRKA) are enriched in basic residues. S1064 carries the phosphoserine modification. Residue T1376 is modified to Phosphothreonine.

Can form homodimers. May be a component of a BHC histone deacetylase complex that contains HDAC1, HDAC2, HMG20B/BRAF35, KDM1A, RCOR1/CoREST, PHF21A/BHC80, ZMYM2, ZNF217, ZMYM3, GSE1 and GTF2I. Interacts with FOXP1 and FOXP2.

The protein resides in the nucleus. In terms of biological role, involved in the negative regulation of transcription. The protein is Zinc finger MYM-type protein 2 (ZMYM2) of Homo sapiens (Human).